We begin with the raw amino-acid sequence, 332 residues long: Putative pumilio homolog 17 (332 aa).

Residues Met-1–Leu-302 form the PUM-HD domain. The stretch at Ser-82–Ala-117 is one Pumilio 1 repeat. The stretch at Ile-118–Asp-152 is one Pumilio 2; degenerate repeat. Pumilio repeat units lie at residues His-153–Met-188, Asp-189–Asp-225, Lys-226–Ala-264, and Cys-265–Tyr-300.

It is found in the cytoplasm. Its function is as follows. Sequence-specific RNA-binding protein that regulates translation and mRNA stability by binding the 3'-UTR of target mRNAs. This chain is Putative pumilio homolog 17 (APUM17), found in Arabidopsis thaliana (Mouse-ear cress).